Consider the following 177-residue polypeptide: N-acetylmuramoyl-L-alanine amidase A (177 aa).

One can recognise an N-acetylmuramoyl-L-alanine amidase domain in the interval 23–158 (QTSAVIMHTM…SGNENRYDPG (136 aa)). A disulfide bridge connects residues cysteine 114 and cysteine 121.

It localises to the secreted. It carries out the reaction Hydrolyzes the link between N-acetylmuramoyl residues and L-amino acid residues in certain cell-wall glycopeptides.. Functionally, antibacterial activity against Gram-positive bacteria M.luteus, S.aureus, E.faecalis and P.acidilactici and Gram-negative bacterium E.coli. The protein is N-acetylmuramoyl-L-alanine amidase A (cwhA) of Achromobacter lyticus.